A 490-amino-acid polypeptide reads, in one-letter code: Probable cytosol aminopeptidase (490 aa).

Residues Lys-256 and Asp-261 each contribute to the Mn(2+) site. Lys-268 is a catalytic residue. Mn(2+) is bound by residues Asp-280, Asp-340, and Glu-342. The active site involves Arg-344.

The protein belongs to the peptidase M17 family. Requires Mn(2+) as cofactor.

It localises to the cytoplasm. It carries out the reaction Release of an N-terminal amino acid, Xaa-|-Yaa-, in which Xaa is preferably Leu, but may be other amino acids including Pro although not Arg or Lys, and Yaa may be Pro. Amino acid amides and methyl esters are also readily hydrolyzed, but rates on arylamides are exceedingly low.. It catalyses the reaction Release of an N-terminal amino acid, preferentially leucine, but not glutamic or aspartic acids.. In terms of biological role, presumably involved in the processing and regular turnover of intracellular proteins. Catalyzes the removal of unsubstituted N-terminal amino acids from various peptides. The protein is Probable cytosol aminopeptidase of Synechococcus sp. (strain CC9902).